Here is a 102-residue protein sequence, read N- to C-terminus: CRISPR-associated endoribonuclease Cas2 (102 aa).

Residue Asp-8 participates in Mg(2+) binding.

This sequence belongs to the CRISPR-associated endoribonuclease Cas2 protein family. In terms of assembly, homodimer, forms a heterotetramer with a Cas1 homodimer. Mg(2+) serves as cofactor.

In terms of biological role, CRISPR (clustered regularly interspaced short palindromic repeat), is an adaptive immune system that provides protection against mobile genetic elements (viruses, transposable elements and conjugative plasmids). CRISPR clusters contain sequences complementary to antecedent mobile elements and target invading nucleic acids. CRISPR clusters are transcribed and processed into CRISPR RNA (crRNA). Functions as a ssRNA-specific endoribonuclease. Involved in the integration of spacer DNA into the CRISPR cassette. The protein is CRISPR-associated endoribonuclease Cas2 of Acidovorax ebreus (strain TPSY) (Diaphorobacter sp. (strain TPSY)).